Here is a 67-residue protein sequence, read N- to C-terminus: Protein C' (67 aa).

It belongs to the rhabdoviruses C protein family.

Its function is as follows. Seems to stimulates transcription by the viral polymerase. May play a role in viral pathogenesis or transmission by insects vectors. This is Protein C' (P) from Vesicular stomatitis Indiana virus (strain San Juan) (VSIV).